Consider the following 449-residue polypeptide: Allantoinase (449 aa).

Residues histidine 61, histidine 63, lysine 148, histidine 184, histidine 240, and aspartate 313 each coordinate Zn(2+). N6-carboxylysine is present on lysine 148.

This sequence belongs to the metallo-dependent hydrolases superfamily. Allantoinase family. As to quaternary structure, homotetramer. It depends on Zn(2+) as a cofactor. In terms of processing, carboxylation allows a single lysine to coordinate two zinc ions.

It catalyses the reaction (S)-allantoin + H2O = allantoate + H(+). Its pathway is nitrogen metabolism; (S)-allantoin degradation; allantoate from (S)-allantoin: step 1/1. Functionally, catalyzes the conversion of allantoin (5-ureidohydantoin) to allantoic acid by hydrolytic cleavage of the five-member hydantoin ring. This Desulfitobacterium hafniense (strain DSM 10664 / DCB-2) protein is Allantoinase.